A 455-amino-acid polypeptide reads, in one-letter code: Ribulose bisphosphate carboxylase large chain (455 aa).

Position 5 is an N6,N6,N6-trimethyllysine (K5). N114 and T164 together coordinate substrate. K166 (proton acceptor) is an active-site residue. K168 lines the substrate pocket. 3 residues coordinate Mg(2+): K192, D194, and E195. K192 is subject to N6-carboxylysine. H285 (proton acceptor) is an active-site residue. Residues R286, H318, and S370 each coordinate substrate.

The protein belongs to the RuBisCO large chain family. Type I subfamily. As to quaternary structure, heterohexadecamer of 8 large chains and 8 small chains; disulfide-linked. The disulfide link is formed within the large subunit homodimers. The cofactor is Mg(2+). Post-translationally, the disulfide bond which can form in the large chain dimeric partners within the hexadecamer appears to be associated with oxidative stress and protein turnover.

Its subcellular location is the plastid. It localises to the chloroplast. The catalysed reaction is 2 (2R)-3-phosphoglycerate + 2 H(+) = D-ribulose 1,5-bisphosphate + CO2 + H2O. The enzyme catalyses D-ribulose 1,5-bisphosphate + O2 = 2-phosphoglycolate + (2R)-3-phosphoglycerate + 2 H(+). Its function is as follows. RuBisCO catalyzes two reactions: the carboxylation of D-ribulose 1,5-bisphosphate, the primary event in carbon dioxide fixation, as well as the oxidative fragmentation of the pentose substrate in the photorespiration process. Both reactions occur simultaneously and in competition at the same active site. The chain is Ribulose bisphosphate carboxylase large chain from Erythrina crista-galli (Cockspur coral tree).